The following is a 543-amino-acid chain: Chaperonin GroEL 2 (543 aa).

ATP-binding positions include 29–32 (TLGP), 86–90 (DGTTT), Gly413, 479–481 (NAA), and Asp495.

It belongs to the chaperonin (HSP60) family. In terms of assembly, forms a cylinder of 14 subunits composed of two heptameric rings stacked back-to-back. Interacts with the co-chaperonin GroES.

Its subcellular location is the cytoplasm. The catalysed reaction is ATP + H2O + a folded polypeptide = ADP + phosphate + an unfolded polypeptide.. Its function is as follows. Together with its co-chaperonin GroES, plays an essential role in assisting protein folding. The GroEL-GroES system forms a nano-cage that allows encapsulation of the non-native substrate proteins and provides a physical environment optimized to promote and accelerate protein folding. This Prochlorococcus marinus (strain NATL1A) protein is Chaperonin GroEL 2.